Reading from the N-terminus, the 526-residue chain is Na(+)/H(+) antiporter NhaB (526 aa).

Helical transmembrane passes span 25–45 (IIAF…IAGW), 52–72 (IFTL…LLLI), 89–109 (IVVN…IYFM), 139–159 (AFLS…AVGM), 204–224 (LMMH…VGEP), 240–260 (FFVR…ATTF), 305–325 (GFIG…VGLI), 355–375 (FTAL…QGLF), 391–411 (LVMF…VFVG), 448–468 (VATP…IAPL), and 479–499 (MALP…YFGL).

Belongs to the NhaB Na(+)/H(+) (TC 2.A.34) antiporter family.

The protein resides in the cell inner membrane. It catalyses the reaction 2 Na(+)(in) + 3 H(+)(out) = 2 Na(+)(out) + 3 H(+)(in). Na(+)/H(+) antiporter that extrudes sodium in exchange for external protons. This Pseudoalteromonas atlantica (strain T6c / ATCC BAA-1087) protein is Na(+)/H(+) antiporter NhaB.